The primary structure comprises 158 residues: Inner membrane assembly complex subunit 17 (158 aa).

The N-terminal 15 residues, 1–15, are a transit peptide targeting the mitochondrion; it reads MFRPLVKRVVTRRFL. The Mitochondrial matrix segment spans residues 16–85; the sequence is AAANNSNAHI…KTQETSLKKF (70 aa). The helical transmembrane segment at 86–108 threads the bilayer; the sequence is VRPAWIFLLMGSIVYLSCHYVWW. Over 109–158 the chain is Mitochondrial intermembrane; it reads KLDYEEKELEYTHKVHQLESELAALNEAHNSSVSSDKNSKRSSRKWYKFW. Positions 110 to 140 form a coiled coil; it reads LDYEEKELEYTHKVHQLESELAALNEAHNSS.

The protein belongs to the INA17 family. Component of the inner membrane assembly (INA) complex, composed of INA17 and INA22. Interacts with a subset of F(1)F(0)-ATP synthase subunits of the F(1)-domain and the peripheral stalk.

The protein resides in the mitochondrion inner membrane. Component of the INA complex (INAC) that promotes the biogenesis of mitochondrial F(1)F(0)-ATP synthase. INAC facilitates the assembly of the peripheral stalk and promotes the assembly of the catalytic F(1)-domain with the membrane-embedded F(0)-domain. This Kluyveromyces lactis (strain ATCC 8585 / CBS 2359 / DSM 70799 / NBRC 1267 / NRRL Y-1140 / WM37) (Yeast) protein is Inner membrane assembly complex subunit 17.